A 211-amino-acid polypeptide reads, in one-letter code: MTIGVVGRKCGMTRIFTEEGVSIPVTVIEIEPNRVTQFKTEETDGYRAVQVTVGERRASRVTAAQAGHFAKANVAAGRTVMEFRLEEGDYQAGDQINAEIFAAGQLVDVTGQSKGKGFQGTIKRWNFRGQDNTHGNSVSHRVPGSIGQCQTPGRVFKGKKMSGHMGAERVTVQSLEVVRVDAERNLLLVKGAVPGATGGNLVVRPAAKARG.

Glutamine 150 bears the N5-methylglutamine mark.

It belongs to the universal ribosomal protein uL3 family. In terms of assembly, part of the 50S ribosomal subunit. Forms a cluster with proteins L14 and L19. In terms of processing, methylated by PrmB.

Its function is as follows. One of the primary rRNA binding proteins, it binds directly near the 3'-end of the 23S rRNA, where it nucleates assembly of the 50S subunit. The sequence is that of Large ribosomal subunit protein uL3 from Pseudomonas syringae pv. syringae (strain B728a).